Here is a 350-residue protein sequence, read N- to C-terminus: Phosphatidylinositol transfer protein PDR17 (350 aa).

The 159-residue stretch at 139-297 folds into the CRAL-TRIO domain; that stretch reads KVAVENETGK…LYNGLLDFKY (159 aa).

In terms of assembly, interacts with phosphatidylserine decarboxylase PSD2. Also interacts with PBI1.

It localises to the cytoplasm. The protein resides in the microsome. It carries out the reaction a 1,2-diacyl-sn-glycero-3-phospho-(1D-myo-inositol)(in) = a 1,2-diacyl-sn-glycero-3-phospho-(1D-myo-inositol)(out). Has phosphatidylinositol transfer activity. Involved in the regulation of the phospholipid composition of plasma- and endomembranes. Altering plasma membrane composition may provide a possible mechanism for multidrug resistance. Contributes to efficient phospholipase D1 activation and phospholipase B1 inhibition in the regulation of phospholipid turnover. Forms a complex with phosphatidylserine decarboxylase PSD2 that seems essential for maintenance of vacuolar phosphatidylethanolamine (PE) levels. Allows interorganelle phosphatidylserine (PtdSer) transport via a process that involves the acceptor membrane complex PDR17-PDS2 that binds to PBI1 which in turn ligates to SCS2 and phosphatidic acid present in the donor membrane, forming a zone of apposition that facilitates PtdSer transfer. The protein is Phosphatidylinositol transfer protein PDR17 of Saccharomyces cerevisiae (strain ATCC 204508 / S288c) (Baker's yeast).